The following is a 382-amino-acid chain: Mannitol-1-phosphate 5-dehydrogenase (382 aa).

4 to 15 provides a ligand contact to NAD(+); that stretch reads AVHFGAGNIGRG.

This sequence belongs to the mannitol dehydrogenase family.

The catalysed reaction is D-mannitol 1-phosphate + NAD(+) = beta-D-fructose 6-phosphate + NADH + H(+). The chain is Mannitol-1-phosphate 5-dehydrogenase from Vibrio vulnificus (strain CMCP6).